A 164-amino-acid polypeptide reads, in one-letter code: uncharacterized protein (164 aa).

Residues 1–29 (MLCVRSSSSNLESDTYLSRYSTRASAGTG) are compositionally biased toward polar residues. Residues 1–62 (MLCVRSSSSN…SKPSNNKNID (62 aa)) are disordered. The span at 43–62 (SSDSSSSSSESKPSNNKNID) shows a compositional bias: low complexity.

This is an uncharacterized protein from Schizosaccharomyces pombe (strain 972 / ATCC 24843) (Fission yeast).